Reading from the N-terminus, the 61-residue chain is Photosystem II reaction center protein K (61 aa).

Residues 1-24 (MLNIFSLICICLNSALYSSSLFFA) constitute a propeptide that is removed on maturation. The chain crosses the membrane as a helical span at residues 40–60 (MPVIPLFFFLLAFVWQAAVSF).

Belongs to the PsbK family. In terms of assembly, PSII is composed of 1 copy each of membrane proteins PsbA, PsbB, PsbC, PsbD, PsbE, PsbF, PsbH, PsbI, PsbJ, PsbK, PsbL, PsbM, PsbT, PsbX, PsbY, PsbZ, Psb30/Ycf12, at least 3 peripheral proteins of the oxygen-evolving complex and a large number of cofactors. It forms dimeric complexes.

It is found in the plastid. Its subcellular location is the chloroplast thylakoid membrane. Functionally, one of the components of the core complex of photosystem II (PSII). PSII is a light-driven water:plastoquinone oxidoreductase that uses light energy to abstract electrons from H(2)O, generating O(2) and a proton gradient subsequently used for ATP formation. It consists of a core antenna complex that captures photons, and an electron transfer chain that converts photonic excitation into a charge separation. This is Photosystem II reaction center protein K from Panax ginseng (Korean ginseng).